The following is a 239-amino-acid chain: Large ribosomal subunit protein uL1 (239 aa).

The protein belongs to the universal ribosomal protein uL1 family. Part of the 50S ribosomal subunit.

Binds directly to 23S rRNA. The L1 stalk is quite mobile in the ribosome, and is involved in E site tRNA release. In terms of biological role, protein L1 is also a translational repressor protein, it controls the translation of the L11 operon by binding to its mRNA. The polypeptide is Large ribosomal subunit protein uL1 (Rickettsia africae (strain ESF-5)).